Here is a 141-residue protein sequence, read N- to C-terminus: Large ribosomal subunit protein uL11 (141 aa).

It belongs to the universal ribosomal protein uL11 family. As to quaternary structure, part of the ribosomal stalk of the 50S ribosomal subunit. Interacts with L10 and the large rRNA to form the base of the stalk. L10 forms an elongated spine to which L12 dimers bind in a sequential fashion forming a multimeric L10(L12)X complex. One or more lysine residues are methylated.

In terms of biological role, forms part of the ribosomal stalk which helps the ribosome interact with GTP-bound translation factors. The chain is Large ribosomal subunit protein uL11 from Campylobacter lari (strain RM2100 / D67 / ATCC BAA-1060).